Reading from the N-terminus, the 330-residue chain is Adenylate isopentenyltransferase 8, chloroplastic (330 aa).

The transit peptide at 1–35 (MQNLTSTFVSPSMIPITSPRLRLPPPRSVVPMTTV) directs the protein to the chloroplast. 50-57 (GATGSGKS) is a binding site for ATP.

The protein belongs to the IPP transferase family. Expressed in roots and in immature seeds with highest expression in the chalazal endosperm.

The protein localises to the plastid. It is found in the chloroplast. The catalysed reaction is dimethylallyl diphosphate + ADP = N(6)-(dimethylallyl)adenosine 5'-diphosphate + diphosphate. The enzyme catalyses dimethylallyl diphosphate + ATP = N(6)-(dimethylallyl)adenosine 5'-triphosphate + diphosphate. Functionally, involved in cytokinin biosynthesis. Catalyzes the transfer of an isopentenyl group from dimethylallyl diphosphate (DMAPP) to ATP and ADP. The chain is Adenylate isopentenyltransferase 8, chloroplastic (IPT8) from Arabidopsis thaliana (Mouse-ear cress).